The sequence spans 392 residues: Phosphoglycerate kinase (392 aa).

Residues 21–23 (DFN), R36, 59–62 (HLGR), R117, and R150 contribute to the substrate site. ATP-binding positions include K200, G288, E319, and 345 to 348 (GGDS).

This sequence belongs to the phosphoglycerate kinase family. As to quaternary structure, monomer.

The protein localises to the cytoplasm. It carries out the reaction (2R)-3-phosphoglycerate + ATP = (2R)-3-phospho-glyceroyl phosphate + ADP. It participates in carbohydrate degradation; glycolysis; pyruvate from D-glyceraldehyde 3-phosphate: step 2/5. The protein is Phosphoglycerate kinase of Rubrobacter xylanophilus (strain DSM 9941 / JCM 11954 / NBRC 16129 / PRD-1).